Here is a 134-residue protein sequence, read N- to C-terminus: Profilin (134 aa).

This sequence belongs to the profilin family. As to quaternary structure, occurs in many kinds of cells as a complex with monomeric actin in a 1:1 ratio.

It is found in the cytoplasm. The protein resides in the cytoskeleton. Binds to actin and affects the structure of the cytoskeleton. At high concentrations, profilin prevents the polymerization of actin, whereas it enhances it at low concentrations. By binding to PIP2, it inhibits the formation of IP3 and DG. The sequence is that of Profilin from Brassica napus (Rape).